The chain runs to 573 residues: Sulfate adenylyltransferase (573 aa).

An N-terminal region spans residues 1–169 (MANPPHGGIL…VEAVNKLNHY (169 aa)). The interval 170–394 (DYVGLRFTPA…LRESNPPRSK (225 aa)) is catalytic. Q197 serves as a coordination point for sulfate. ATP-binding positions include 197–200 (QTRN) and 291–294 (GRDH). Active-site residues include T198, R199, and N200. Position 199 (R199) interacts with sulfate. A295 contacts sulfate. L333 is a binding site for ATP. The tract at residues 395 to 573 (QGFTVFLTGY…LESQGFLEKA (179 aa)) is allosteric regulation domain; adenylyl-sulfate kinase-like. 3'-phosphoadenylyl sulfate is bound by residues 434-437 (DTVR), R451, 477-478 (IA), and R515.

It in the N-terminal section; belongs to the sulfate adenylyltransferase family. This sequence in the C-terminal section; belongs to the APS kinase family. In terms of assembly, homohexamer. Dimer of trimers.

The protein localises to the cytoplasm. It catalyses the reaction sulfate + ATP + H(+) = adenosine 5'-phosphosulfate + diphosphate. It participates in sulfur metabolism; hydrogen sulfide biosynthesis; sulfite from sulfate: step 1/3. Allosterically inhibited by 3'-phosphoadenosine 5'-phosphosulfate (PAPS). Catalyzes the first intracellular reaction of sulfate assimilation, forming adenosine-5'-phosphosulfate (APS) from inorganic sulfate and ATP. Plays an important role in sulfate activation as a component of the biosynthesis pathway of sulfur-containing amino acids. This chain is Sulfate adenylyltransferase, found in Coccidioides immitis (strain RS) (Valley fever fungus).